Here is a 220-residue protein sequence, read N- to C-terminus: Peptidoglycan hydrolase gp5 (220 aa).

This sequence belongs to the peptidase U40 family. Monomer.

Its subcellular location is the virion. Functionally, muralytic enzyme exposed to host peptidoglycan layer after membrane fusion during viral entry. Functions as an exolysin that cleaves the peptide bridge formed by meso-diaminopimelic acid and D-alanine. Also lyses the host cell late in infection to release the virions. The chain is Peptidoglycan hydrolase gp5 (P5) from Pseudomonas savastanoi pv. phaseolicola (Pseudomonas syringae pv. phaseolicola).